A 466-amino-acid polypeptide reads, in one-letter code: Myocardial zonula adherens protein (466 aa).

Residues M1 to L10 are compositionally biased toward polar residues. The signal sequence occupies residues M1–A16. A disordered region spans residues M1 to P68. The span at T45–P55 shows a compositional bias: basic and acidic residues. 2 coiled-coil regions span residues N95–S137 and H187–T415.

Belongs to the MYZAP family. Interacts with DSP, MPRIP and TJP1/ZO1. Interaction with MPRIP inhibits the activation of transcription factor SRF. Interacts with GRIN1. Interacts with DYNLL1. In terms of tissue distribution, detected in heart myocardium and lung.

It is found in the cytoplasm. The protein localises to the cytoskeleton. The protein resides in the cell membrane. It localises to the myofibril. Its subcellular location is the sarcomere. It is found in the i band. The protein localises to the z line. The protein resides in the cell junction. Its function is as follows. Plays a role in cellular signaling via Rho-related GTP-binding proteins and activation of transcription factor SRF. Targets TJP1 to cell junctions. In cortical neurons, may play a role in glutaminergic signal transduction through interaction with the NMDA receptor subunit GRIN1. The chain is Myocardial zonula adherens protein (Myzap) from Mus musculus (Mouse).